A 496-amino-acid chain; its full sequence is Probable malate:quinone oxidoreductase (496 aa).

The protein belongs to the MQO family. The cofactor is FAD.

The enzyme catalyses (S)-malate + a quinone = a quinol + oxaloacetate. Its pathway is carbohydrate metabolism; tricarboxylic acid cycle; oxaloacetate from (S)-malate (quinone route): step 1/1. This is Probable malate:quinone oxidoreductase from Prochlorococcus marinus (strain MIT 9303).